We begin with the raw amino-acid sequence, 344 residues long: Phosphate acyltransferase (344 aa).

This sequence belongs to the PlsX family. In terms of assembly, homodimer. Probably interacts with PlsY.

It localises to the cytoplasm. It carries out the reaction a fatty acyl-[ACP] + phosphate = an acyl phosphate + holo-[ACP]. The protein operates within lipid metabolism; phospholipid metabolism. In terms of biological role, catalyzes the reversible formation of acyl-phosphate (acyl-PO(4)) from acyl-[acyl-carrier-protein] (acyl-ACP). This enzyme utilizes acyl-ACP as fatty acyl donor, but not acyl-CoA. This chain is Phosphate acyltransferase, found in Cronobacter sakazakii (strain ATCC BAA-894) (Enterobacter sakazakii).